The chain runs to 308 residues: Methionyl-tRNA formyltransferase (308 aa).

Residue 109–112 (SLLP) participates in (6S)-5,6,7,8-tetrahydrofolate binding.

The protein belongs to the Fmt family.

The enzyme catalyses L-methionyl-tRNA(fMet) + (6R)-10-formyltetrahydrofolate = N-formyl-L-methionyl-tRNA(fMet) + (6S)-5,6,7,8-tetrahydrofolate + H(+). Its function is as follows. Attaches a formyl group to the free amino group of methionyl-tRNA(fMet). The formyl group appears to play a dual role in the initiator identity of N-formylmethionyl-tRNA by promoting its recognition by IF2 and preventing the misappropriation of this tRNA by the elongation apparatus. The polypeptide is Methionyl-tRNA formyltransferase (Phenylobacterium zucineum (strain HLK1)).